Here is a 640-residue protein sequence, read N- to C-terminus: Asparagine synthetase domain-containing protein 1 (640 aa).

The active-site For GATase activity is C2. One can recognise a Glutamine amidotransferase type-2 domain in the interval 2–184 (CGICCAVSFS…ASGIFRIDLK (183 aa)). The Asparagine synthetase domain occupies 286 to 602 (QFIGVLSTAV…GLTASALLPK (317 aa)).

This chain is Asparagine synthetase domain-containing protein 1 (ASNSD1), found in Bos taurus (Bovine).